Reading from the N-terminus, the 1077-residue chain is Eukaryotic translation initiation factor 2-alpha kinase pek-1 (1077 aa).

The first 23 residues, 1 to 23, serve as a signal peptide directing secretion; the sequence is MSVYYIVLAGFLLFMALVPFNAG. The Lumenal segment spans residues 24–453; it reads QQYIDDDIEV…ITLMQTIFSY (430 aa). A glycan (N-linked (GlcNAc...) asparagine) is linked at N206. The helical transmembrane segment at 454 to 474 threads the bilayer; that stretch reads IFNPTAVVSFLAGLIGVTVAV. The Cytoplasmic segment spans residues 475–1077; the sequence is VYNKIAKSSP…HEVATHKFLQ (603 aa). A Protein kinase domain is found at 604–1076; sequence FEVKKVIGHG…AHEVATHKFL (473 aa). Residues 610–618 and K633 contribute to the ATP site; that span reads IGHGGFGVV. Residues 727 to 834 are disordered; sequence MPPVVGNTTD…FVDGSDDVDN (108 aa). Residues 732-746 are compositionally biased toward polar residues; the sequence is GNTTDAENSWSTSAK. The segment covering 766–778 has biased composition (basic and acidic residues); sequence GSDRTTAELKEES. Residues 783–796 are compositionally biased toward acidic residues; sequence ESDEESDTTEDSSS. Residues 797 to 808 are compositionally biased toward low complexity; it reads SDESPSSSSGSS. The active-site Proton acceptor is the D933.

This sequence belongs to the protein kinase superfamily. Ser/Thr protein kinase family. GCN2 subfamily. As to quaternary structure, forms dimers with HSPA5/BIP in resting cells. Oligomerizes in ER-stressed cells. In terms of processing, autophosphorylated. N-glycosylated. Expressed in intestinal cells.

The protein localises to the endoplasmic reticulum membrane. It catalyses the reaction L-seryl-[protein] + ATP = O-phospho-L-seryl-[protein] + ADP + H(+). The enzyme catalyses L-threonyl-[protein] + ATP = O-phospho-L-threonyl-[protein] + ADP + H(+). With respect to regulation, perturbation in protein folding in the endoplasmic reticulum (ER) promotes reversible dissociation from HSPA5/BIP and oligomerization, resulting in transautophosphorylation and kinase activity induction. Functionally, phosphorylates the alpha subunit of eukaryotic translation-initiation factor 2 (eIF2alpha), leading to its inactivation and thus to a rapid reduction of translational initiation and repression of global protein synthesis. May phosphorylate eIF2alpha during hypoxia. Proposed to have a role in alleviating endoplasmic reticulum stress. The protein is Eukaryotic translation initiation factor 2-alpha kinase pek-1 (pek-1) of Caenorhabditis elegans.